A 300-amino-acid polypeptide reads, in one-letter code: Mycothiol acetyltransferase (300 aa).

N-acetyltransferase domains follow at residues Ile4 to Thr140 and Val151 to Asp300. Position 36 (Asp36) interacts with 1D-myo-inositol 2-(L-cysteinylamino)-2-deoxy-alpha-D-glucopyranoside. Leu79 to Val81 serves as a coordination point for acetyl-CoA. 1D-myo-inositol 2-(L-cysteinylamino)-2-deoxy-alpha-D-glucopyranoside contacts are provided by Glu178, Lys219, and Glu227. Residue Val231–Val233 coordinates acetyl-CoA. Tyr269 is a 1D-myo-inositol 2-(L-cysteinylamino)-2-deoxy-alpha-D-glucopyranoside binding site. Asn274–Lys279 contacts acetyl-CoA.

This sequence belongs to the acetyltransferase family. MshD subfamily. In terms of assembly, monomer.

It carries out the reaction 1D-myo-inositol 2-(L-cysteinylamino)-2-deoxy-alpha-D-glucopyranoside + acetyl-CoA = mycothiol + CoA + H(+). Its function is as follows. Catalyzes the transfer of acetyl from acetyl-CoA to desacetylmycothiol (Cys-GlcN-Ins) to form mycothiol. This Mycobacterium sp. (strain MCS) protein is Mycothiol acetyltransferase.